A 179-amino-acid polypeptide reads, in one-letter code: Sec-independent protein translocase protein TatB (179 aa).

Residues M1–G21 form a helical membrane-spanning segment. 2 stretches are compositionally biased toward basic and acidic residues: residues K75–A86 and T94–A106. The tract at residues K75–Q179 is disordered.

The protein belongs to the TatB family. In terms of assembly, the Tat system comprises two distinct complexes: a TatABC complex, containing multiple copies of TatA, TatB and TatC subunits, and a separate TatA complex, containing only TatA subunits. Substrates initially bind to the TatABC complex, which probably triggers association of the separate TatA complex to form the active translocon.

It localises to the cell inner membrane. Functionally, part of the twin-arginine translocation (Tat) system that transports large folded proteins containing a characteristic twin-arginine motif in their signal peptide across membranes. Together with TatC, TatB is part of a receptor directly interacting with Tat signal peptides. TatB may form an oligomeric binding site that transiently accommodates folded Tat precursor proteins before their translocation. In Alkalilimnicola ehrlichii (strain ATCC BAA-1101 / DSM 17681 / MLHE-1), this protein is Sec-independent protein translocase protein TatB.